Here is a 1967-residue protein sequence, read N- to C-terminus: RQC trigger complex helicase SLH1 (1967 aa).

The region spanning 297-485 is the Helicase ATP-binding 1 domain; that stretch reads PVAYKTNENM…FLGVNRQIGM (189 aa). 310-317 is an ATP binding site; sequence APTGAGKT. The DEVH box motif lies at 427 to 430; that stretch reads DEVH. Positions 516 to 735 constitute a Helicase C-terminal 1 domain; the sequence is NIDKVAYDKL…NVDEAIEWLG (220 aa). One can recognise an SEC63 1 domain in the interval 795–1100; the sequence is AKDLGRVSSD…GCESTHAISF (306 aa). Positions 1149–1324 constitute a Helicase ATP-binding 2 domain; the sequence is YTLYNTNENA…WLGVKDHGLY (176 aa). An ATP-binding site is contributed by 1162–1169; sequence SPTGSGKT. Positions 1266-1269 match the DEAH box motif; it reads DEIH. The region spanning 1355–1550 is the Helicase C-terminal 2 domain; sequence MNKPVFMAIK…SLHKVLDDHL (196 aa). An SEC63 2 domain is found at 1626-1776; the sequence is ATPFLSISSY…MMQCIKQGYW (151 aa).

This sequence belongs to the helicase family. SKI2 subfamily. In terms of assembly, component of the RQT (ribosome quality control trigger) complex, composed of SLH1, CUE3, and RQT4. Interacts with CUE3. Interacts with RQT4. Interacts with HEL2. Associates with translating ribosomes.

The protein resides in the cytoplasm. It is found in the cytosol. It catalyses the reaction ATP + H2O = ADP + phosphate + H(+). Functionally, involved in activation of the ribosome quality control (RQC) pathway, a pathway that degrades nascent peptide chains during problematic translation. Drives the splitting of stalled ribosomes that are polyubiquitinated in a HEL2-dependent manner, as part of the ribosome quality control trigger (RQT) complex. Also represses the translation of non-poly(A) mRNAs together with SKI2. May block translation by inhibiting translation initiation factor 5B (FUN12) action on mRNAs lacking a 3' poly(A) structure. Involved in antiviral defense, preventing L-A dsRNA virus propagation by specifically blocking translation of viral mRNAs. This Saccharomyces cerevisiae (strain ATCC 204508 / S288c) (Baker's yeast) protein is RQC trigger complex helicase SLH1.